Reading from the N-terminus, the 562-residue chain is Carboxylesterase 1E (562 aa).

An N-terminal signal peptide occupies residues 1 to 19 (MCLSALILVSLAAFTAGAG). A glycan (N-linked (GlcNAc...) asparagine) is linked at Asn80. Residues Cys88 and Cys117 are joined by a disulfide bond. Ser222 functions as the Acyl-ester intermediate in the catalytic mechanism. Cys274 and Cys285 are joined by a disulfide. N-linked (GlcNAc...) asparagine glycosylation is present at Asn276. Catalysis depends on charge relay system residues Glu354 and His467. Residue Asn490 is glycosylated (N-linked (GlcNAc...) asparagine). The Prevents secretion from ER signature appears at 559 to 562 (HTEL).

This sequence belongs to the type-B carboxylesterase/lipase family.

The protein localises to the endoplasmic reticulum lumen. Its subcellular location is the microsome membrane. It catalyses the reaction a carboxylic ester + H2O = an alcohol + a carboxylate + H(+). The enzyme catalyses all-trans-retinyl hexadecanoate + H2O = all-trans-retinol + hexadecanoate + H(+). Functionally, involved in the detoxification of xenobiotics and in the activation of ester and amide prodrugs. Hydrolyzes retinyl esters. This is Carboxylesterase 1E from Mus musculus (Mouse).